We begin with the raw amino-acid sequence, 211 residues long: Ribonuclease HII (211 aa).

An RNase H type-2 domain is found at 1–205; that stretch reads MRFGVDEAGK…CDDVLAAASQ (205 aa). Residues Asp6, Glu7, and Asp100 each contribute to the a divalent metal cation site.

The protein belongs to the RNase HII family. Mn(2+) is required as a cofactor. The cofactor is Mg(2+).

The protein localises to the cytoplasm. The enzyme catalyses Endonucleolytic cleavage to 5'-phosphomonoester.. Its function is as follows. Endonuclease that specifically degrades the RNA of RNA-DNA hybrids. In Haloarcula marismortui (strain ATCC 43049 / DSM 3752 / JCM 8966 / VKM B-1809) (Halobacterium marismortui), this protein is Ribonuclease HII.